We begin with the raw amino-acid sequence, 121 residues long: Class I hydrophobin 2 (121 aa).

The signal sequence occupies residues 1-18 (MQFTTIVMTLAAAVAVTA). 4 disulfide bridges follow: Cys52/Cys101, Cys60/Cys94, Cys61/Cys79, and Cys102/Cys116. N-linked (GlcNAc...) asparagine glycosylation is present at Asn83.

It belongs to the fungal hydrophobin family. As to quaternary structure, self-assembles to form functional amyloid fibrils called rodlets. Self-assembly into fibrillar rodlets occurs spontaneously at hydrophobic:hydrophilic interfaces and the rodlets further associate laterally to form amphipathic monolayers. As to expression, expressed in conidia and aerial hyphae.

It is found in the secreted. The protein localises to the cell wall. Aerial growth, conidiation, and dispersal of filamentous fungi in the environment rely upon a capability of their secreting small amphipathic proteins called hydrophobins (HPBs) with low sequence identity. Class I can self-assemble into an outermost layer of rodlet bundles on aerial cell surfaces, conferring cellular hydrophobicity that supports fungal growth, development and dispersal; whereas Class II form highly ordered films at water-air interfaces through intermolecular interactions but contribute nothing to the rodlet structure. Hcf-2 is a class I hydrophobin that is not necessary for the development of hyphae or conidia but contributes to cell surface hydrophobicity. This Passalora fulva (Tomato leaf mold) protein is Class I hydrophobin 2.